The chain runs to 834 residues: Ras GTPase-activating protein 3 (834 aa).

2 C2 domains span residues 1-112 (MAVE…DTWF) and 123-263 (VQGK…EAWY). A2 carries the N-acetylalanine modification. Y66 is modified (phosphotyrosine). S77 bears the Phosphoserine mark. Residue T110 is modified to Phosphothreonine. In terms of domain architecture, Ras-GAP spans 346–561 (GRVVPFISAI…DAVKNFLDLI (216 aa)). The region spanning 576–677 (ILLKEGFMIK…WIDILTKVSQ (102 aa)) is the PH domain. The Btk-type zinc finger occupies 679–715 (NQKRLTVFHPSAYLNGHWLCCRASSDTAIGCTPCTGG). Residues H687, C698, C699, and C709 each contribute to the Zn(2+) site. A phosphoserine mark is found at S809 and S833.

Its function is as follows. Inhibitory regulator of the Ras-cyclic AMP pathway. Binds inositol tetrakisphosphate (IP4). The protein is Ras GTPase-activating protein 3 (Rasa3) of Rattus norvegicus (Rat).